Here is a 77-residue protein sequence, read N- to C-terminus: Large ribosomal subunit protein bL28 (77 aa).

Residues 1 to 25 (MARVCQVTGKAPMSGNNVSHANNKT) are disordered.

Belongs to the bacterial ribosomal protein bL28 family.

The protein is Large ribosomal subunit protein bL28 of Paraburkholderia phymatum (strain DSM 17167 / CIP 108236 / LMG 21445 / STM815) (Burkholderia phymatum).